The primary structure comprises 443 residues: Tol-Pal system protein TolB (443 aa).

Positions 1 to 33 are cleaved as a signal peptide; sequence MKIGIINTKIRTVFSAFACMIAASLVCTMPARA.

It belongs to the TolB family. As to quaternary structure, the Tol-Pal system is composed of five core proteins: the inner membrane proteins TolA, TolQ and TolR, the periplasmic protein TolB and the outer membrane protein Pal. They form a network linking the inner and outer membranes and the peptidoglycan layer.

The protein localises to the periplasm. In terms of biological role, part of the Tol-Pal system, which plays a role in outer membrane invagination during cell division and is important for maintaining outer membrane integrity. The protein is Tol-Pal system protein TolB of Brucella melitensis biotype 1 (strain ATCC 23456 / CCUG 17765 / NCTC 10094 / 16M).